Consider the following 478-residue polypeptide: Histidine--tRNA ligase (478 aa).

This sequence belongs to the class-II aminoacyl-tRNA synthetase family. In terms of assembly, homodimer.

It localises to the cytoplasm. It catalyses the reaction tRNA(His) + L-histidine + ATP = L-histidyl-tRNA(His) + AMP + diphosphate + H(+). In Xanthomonas axonopodis pv. citri (strain 306), this protein is Histidine--tRNA ligase (hisS).